Reading from the N-terminus, the 549-residue chain is Cation/acetate symporter ActP (549 aa).

Transmembrane regions (helical) follow at residues 33–53 (WQAI…TYWA), 76–96 (GLAI…SALV), 103–123 (GLIY…LIAE), 149–169 (LSAC…MVGA), 183–203 (IAVV…GMLA), 206–226 (WVQI…AFMV), 262–282 (ISAL…PHIL), 303–323 (GFMG…IMLV), 355–375 (LFLG…VAGL), 404–424 (VSKI…ILFE), 428–448 (IAFM…PIIL), 463–483 (IGGW…PTIW), and 493–513 (IFPY…GIWF).

Belongs to the sodium:solute symporter (SSF) (TC 2.A.21) family.

Its subcellular location is the cell inner membrane. In terms of biological role, transports acetate. The chain is Cation/acetate symporter ActP from Enterobacter sp. (strain 638).